The chain runs to 589 residues: Complement component C8 beta chain (589 aa).

The first 31 residues, methionine 1–glycine 31, serve as a signal peptide directing secretion. A propeptide spanning residues glycine 32–arginine 53 is cleaved from the precursor. Residue asparagine 43 is glycosylated (N-linked (GlcNAc...) asparagine). Residues aspartate 63 to arginine 116 enclose the TSP type-1 1 domain. Cystine bridges form between cysteine 64-cysteine 99, cysteine 75-cysteine 109, cysteine 78-cysteine 115, cysteine 121-cysteine 132, cysteine 126-cysteine 145, cysteine 139-cysteine 154, and cysteine 161-cysteine 199. 2 C-linked (Man) tryptophan glycosylation sites follow: tryptophan 69 and tryptophan 72. Residues arginine 120–arginine 155 enclose the LDL-receptor class A domain. Ca(2+) contacts are provided by leucine 137, asparagine 140, aspartate 142, aspartate 144, aspartate 150, and glutamate 151. Positions isoleucine 157–arginine 503 constitute an MACPF domain. 8 beta stranded membrane passes run proline 201–aspartate 206, phenylalanine 209–tyrosine 213, phenylalanine 251–lysine 258, glycine 261–lysine 268, serine 328–leucine 335, aspartate 338–phenylalanine 343, alanine 378–glycine 385, and valine 391–serine 398. The cysteines at positions 377 and 402 are disulfide-linked. The 131-residue stretch at aspartate 404–glutamate 534 folds into the EGF-like domain. Threonine 417 carries the phosphothreonine modification. Intrachain disulfides connect cysteine 502-cysteine 549, cysteine 504-cysteine 520, cysteine 507-cysteine 522, and cysteine 524-cysteine 533. The TSP type-1 2 domain occupies aspartate 544–leucine 587. Tryptophan 550 and tryptophan 553 each carry a C-linked (Man) tryptophan glycan. The cysteines at positions 556 and 589 are disulfide-linked. The segment at proline 570 to cysteine 589 is disordered.

Belongs to the complement C6/C7/C8/C9 family. As to quaternary structure, heterotrimer of 3 chains: alpha (C8A), beta (C8B) and gamma (C8G); the alpha and gamma chains are disulfide bonded. Component of the membrane attack complex (MAC), composed of complement C5b, C6, C7, C8A, C8B, C8G and multiple copies of the pore-forming subunit C9. In terms of processing, N-glycosylated; contains one or two bound glycans. Not O-glycosylated.

The protein localises to the secreted. It localises to the target cell membrane. With respect to regulation, membrane attack complex (MAC) assembly is inhibited by CD59, thereby protecting self-cells from damage during complement activation. CD59 acts by binding to the beta-haipins of C8 (C8A and C8B), forming an intermolecular beta-sheet that prevents incorporation of the multiple copies of C9 required for complete formation of the osmolytic pore. MAC assembly is also inhibited by clusterin (CLU) chaperones that inhibit polymerization of C9. Its function is as follows. Component of the membrane attack complex (MAC), a multiprotein complex activated by the complement cascade, which inserts into a target cell membrane and forms a pore, leading to target cell membrane rupture and cell lysis. The MAC is initiated by proteolytic cleavage of C5 into complement C5b in response to the classical, alternative, lectin and GZMK complement pathways. The complement pathways consist in a cascade of proteins that leads to phagocytosis and breakdown of pathogens and signaling that strengthens the adaptive immune system. C8B, together with C8A and C8G, inserts into the target membrane, but does not form pores by itself. During MAC assembly, associates with C5b, C6 and C7 to form the C5b8 intermediate complex that inserts into the target membrane and traverses the bilayer increasing membrane rigidity. This Mus musculus (Mouse) protein is Complement component C8 beta chain (C8b).